The primary structure comprises 199 residues: N-(5'-phosphoribosyl)anthranilate isomerase (199 aa).

This sequence belongs to the TrpF family.

It catalyses the reaction N-(5-phospho-beta-D-ribosyl)anthranilate = 1-(2-carboxyphenylamino)-1-deoxy-D-ribulose 5-phosphate. It functions in the pathway amino-acid biosynthesis; L-tryptophan biosynthesis; L-tryptophan from chorismate: step 3/5. The polypeptide is N-(5'-phosphoribosyl)anthranilate isomerase (Streptococcus pneumoniae (strain Taiwan19F-14)).